The sequence spans 450 residues: Saccharopine dehydrogenase [NADP(+), L-glutamate-forming] (450 aa).

Residues Ser9 to Val12, Cys32 to Thr34, Asp54 to Val55, Ile75, Thr97 to Ser98, Val124 to Pro126, and Ser174 each bind NADP(+). Residues Ser98–Tyr99 and Asp125 contribute to the L-saccharopine site. L-saccharopine-binding positions include Arg223 and Thr244–Arg246.

Belongs to the saccharopine dehydrogenase family. In terms of assembly, homodimer.

Its subcellular location is the cytoplasm. The enzyme catalyses L-saccharopine + NADP(+) + H2O = (S)-2-amino-6-oxohexanoate + L-glutamate + NADPH + H(+). The protein operates within amino-acid biosynthesis; L-lysine biosynthesis via AAA pathway; L-lysine from L-alpha-aminoadipate (fungal route): step 2/3. The protein is Saccharopine dehydrogenase [NADP(+), L-glutamate-forming] of Schizosaccharomyces pombe (strain 972 / ATCC 24843) (Fission yeast).